The chain runs to 570 residues: Interleukin-1 receptor accessory protein (570 aa).

The N-terminal stretch at 1–20 is a signal peptide; that stretch reads MGLLWYLMSLSFYGILQSHA. 3 consecutive Ig-like C2-type domains span residues 21 to 128, 139 to 230, and 243 to 348; these read SERC…VAFP, NSAM…RTVT, and PQIY…AKVK. Over 21-367 the chain is Extracellular; sequence SERCDDWGLD…VELACGFGAT (347 aa). Disulfide bonds link cysteine 24-cysteine 122, cysteine 47-cysteine 114, cysteine 137-cysteine 181, cysteine 160-cysteine 212, and cysteine 266-cysteine 332. The N-linked (GlcNAc...) asparagine glycan is linked to asparagine 57. An essential for interaction with PTPRD region spans residues 69 to 85; the sequence is IWYWTRQDRDLEEPINF. N-linked (GlcNAc...) asparagine glycosylation is found at asparagine 107, asparagine 111, and asparagine 118. N-linked (GlcNAc...) asparagine glycans are attached at residues asparagine 196, asparagine 209, and asparagine 299. A helical membrane pass occupies residues 368-388; that stretch reads VFLVVVLIVVYHVYWLEMVLF. At 389 to 570 the chain is on the cytoplasmic side; sequence YRAHFGTDET…GLSYSSLKNV (182 aa). A TIR domain is found at 403 to 546; the sequence is KEYDIYVSYA…RFWKQLQVAM (144 aa). Glutamate 482 is a catalytic residue. The segment at 550-570 is disordered; that stretch reads KSPRWSSNDKQGLSYSSLKNV. Over residues 553 to 570 the composition is skewed to polar residues; sequence RWSSNDKQGLSYSSLKNV.

This sequence belongs to the interleukin-1 receptor family. In terms of assembly, the interleukin-36 receptor complex is a heterodimer of IL1RL2 and IL1RAP; the association is inhibited by IL36RN. The interleukin-1 receptor complex is a heterodimer of IL1R1 and IL1RAP. Associates with IL1R2 to form a non-signaling interleukin-1 receptor complex. Interacts with IL-33-bound IL1RL1 to form the minimal interleukin-33 signaling complex with a 1:1:1 stoichiometry. Interacts with KIT (independently of stimulation with KITLG/SCF). A mast cell-specific KITLG/SCF-induced interleukin-33 signaling complex contains IL1RL1, IL1RAP, KIT and MYD88. Interacts (via the first immunoglobilin domain) with PTPRD (via the third immunoglobilin domain); induces pre- and postsynaptic differentiation of neurons. Detected in lung, brain, spleen, thymus and liver. Expressed in brain endothelial cells, astrocytes, microglia and neurons. Isoform 3 is predominantly expressed in brain; expressed in hippocampal neurons.

It is found in the cell membrane. The protein resides in the secreted. The enzyme catalyses NAD(+) + H2O = ADP-D-ribose + nicotinamide + H(+). In terms of biological role, coreceptor for IL1RL2 in the IL-36 signaling system. Coreceptor with IL1R1 in the IL-1 signaling system. Associates with IL1R1 bound to IL1B to form the high affinity interleukin-1 receptor complex which mediates interleukin-1-dependent activation of NF-kappa-B and other pathways. Signaling involves the recruitment of adapter molecules such as TOLLIP, MYD88, and IRAK1 or IRAK2 via the respective TIR domains of the receptor/coreceptor subunits. Recruits TOLLIP to the signaling complex. Does not bind to interleukin-1 alone; binding of IL1RN to IL1R1, prevents its association with IL1R1 to form a signaling complex. The cellular response is modulated through a non-signaling association with the membrane IL1R2 decoy receptor. Secreted forms (isoforms 2 and 3) associate with secreted ligand-bound IL1R2 and increase the affinity of secreted IL1R2 for IL1B; this complex formation may be the dominant mechanism for neutralization of IL1B by secreted/soluble receptors. Coreceptor for IL1RL1 in the IL-33 signaling system. Can bidirectionally induce pre- and postsynaptic differentiation of neurons by trans-synaptically binding to PTPRD. May play a role in IL1B-mediated costimulation of IFNG production from T-helper 1 (Th1) cells. Associates with secreted ligand-bound IL1R2 and increases the affinity of secreted IL1R2 for IL1B; this complex formation may be the dominant mechanism for neutralization of IL1B by secreted/soluble receptors. Enhances the ability of secreted IL1R1 to inhibit IL-33 signaling. Functionally, required for Src phosphorylation by IL1B. Required for IL1B-potentiated NMDA-induced calcium influx in neurons acting in cooperation with IL1R1 isoform 2 to mediate Akt kinase activation. This chain is Interleukin-1 receptor accessory protein (Il1rap), found in Mus musculus (Mouse).